The chain runs to 356 residues: Cell division protein ZipA (356 aa).

Topologically, residues 1-6 (MEDLQL) are periplasmic. A helical membrane pass occupies residues 7-27 (VLFVLGAIAIVAVLVHGFWSI). The Cytoplasmic portion of the chain corresponds to 28-356 (RRQQPKSLKD…DYLHRIRANA (329 aa)). The interval 132 to 155 (PAQPDFSLQPPVAKEQHRGPKVSR) is disordered.

It belongs to the ZipA family. As to quaternary structure, interacts with FtsZ via their C-terminal domains.

The protein resides in the cell inner membrane. Functionally, essential cell division protein that stabilizes the FtsZ protofilaments by cross-linking them and that serves as a cytoplasmic membrane anchor for the Z ring. Also required for the recruitment to the septal ring of downstream cell division proteins. This chain is Cell division protein ZipA, found in Shewanella baltica (strain OS185).